The chain runs to 1596 residues: MTSIKTEMPPLHAAEALASSSATDSGGGGAGGGGGGGGGGSGGPGAGGTGGVGSAPATPNATISAAADSSDNQPGTPQPTQQQQSTQQQLQQPQSQQQQQQAMGGGDPQQQQQQQQVTGITHQPYATHHMYSASGGQQQQQQQIYGGLYGGDMQQQQGYASSYINSYEQFYQQQQQQQQGTDYAFGTVGVDYGKSAGVRYHPYLQTPTSGLGGIPTASSAQEEAGSAPSAVSTTTAVAMSPRVVSSSSPTSTSSHLQLGSSSGQTPGSPGGAAGSAGCKLQCKKCGILTTNESELQEHIANVHGESPYGSSGYASSPYIKEEMPTPQPPGVGSATANPGELLDLDSQKMVYHQQLLQQQQQQHDVVAGLPLGALPDPLHSMQSMQQRALHSWEQQPQQTVASVEGLPPYMQQGLGVGLGVGVDKSPYYSPKQSPYHQSTGVGGATLIKQEYGGHGLIKSEYPDSQHYVDKSFDPTAGGAGGAELCASVATSPAEFPSTTTGGPGQEGAAGAAPGGGYRGFEPPSSSSVLPANSLTAKAATWKSNEARRPKTYNCTACNKWFTSSGHLKRHYNTTLHKNAVKSSGQPDPATLPISAHHHPARDPVTKPSRRGNAAAAAAAAAAAASASGQGQQQQPPIPPPPANVPPPEPPRSPPDYGGGGGLGVGAMGGAAMSQYSASPSPTQQQQHHLNHHQQQANGYANGTANGYGYMQQQVQSTTNASPQHASNNNSNNQQQQQQQQQHHQQQMPQHHNSVLNGHPNGLAGPSAPHNNNTTQMPSSQMRGLLNETTTTPPPTTTTRAPQITTTATTTTTAATTVAIKSEQMEDSNHTHTHTHTHPNHSHSQDRSHSSSSSSSMATEEAEEQELRDQEQADDHLHQHQQASQQYLLSARHYHSSTPNTLSSSNTNPSTPSSNSPHTIYRQEQQGTDFSRTTPPPQPLPPMGMLPPMAMDYNMLALDMPMPMPTLMHSNMLQCSSTSTTPLATTITTSMPDTMQPPQQQLVHHYQAVLHPLHQQLGEQHQRQEADHHQQQRELHQLDQQQQQQQALILADSLPHSSSSPTSSSPPPTMPMPLTTITAPQLLPLQPPPPHITSTMPMPPTMHMPIMPPPPQCYQQLQPLDPTMSYHTIIGSGPEAHTGTAGGGYSNQITTSDGQILQLMPTSLFAPYAPLSPYSVAAQRSPQEGDLPPVHTLTTALHAHQQGGQQEAQTPTLTVLSTPYSPTVSSSRATPALEMDMATLMQHHQDYEMEQYQMQHQQLDQMQQHQQQLDHQQQQQILADQTQTMAQQPLAKKRRGGNATPSTTKRRRNSSVGSTSPHSTTLPSGRIKCLECDKEFTKNCYLTQHNKSFHSGEYPFRCQKCGKRFQSEDVYTTHLGRHRTQDKPHKCELCPKQFHHKTDLRRHVEAIHTGLKQHMCDICEKGFCRKDHLRKHLETHNRPRVVGKKSAAAAAAAAAAAAVTATAGLGGAPAAGSIKAAFARSLTVTAVSSEPGAGVAIPSAPATATCAPVSVSASALVQAVNPSLTSGLSLKRHIDDVAVDDDSLLEEDEDEMEMEMEMDMLEEEDEEEEELGDHHMIIKSEYVQEEFQMIEKSIELY.

3 disordered regions span residues Met1–Gln143, Ser209–Ala273, and Thr490–Pro530. The span at Ala13–Asp24 shows a compositional bias: low complexity. Residues Ser25–Gly53 show a composition bias toward gly residues. Polar residues predominate over residues Asn60–Asn72. 2 stretches are compositionally biased toward low complexity: residues Gln73 to Gln123 and Ser226 to Gly267. The span at Gly501–Arg518 shows a compositional bias: gly residues. A C2H2-type 1 zinc finger spans residues Tyr552 to His576. Disordered regions lie at residues Asn578–Ala813, Glu825–Leu945, Gly1017–Thr1074, and Gln1252–Pro1322. Residues Arg610–Gln634 are compositionally biased toward low complexity. A compositionally biased stretch (pro residues) spans Pro635–Pro653. Gly residues predominate over residues Tyr656–Gly668. Over residues Ser673–Thr682 the composition is skewed to polar residues. 2 stretches are compositionally biased toward low complexity: residues Gln683 to Tyr709 and Asn719 to Ser753. Positions Pro768–Met781 are enriched in polar residues. Positions Thr796–Ala813 are enriched in low complexity. Residues Thr830–His840 are compositionally biased toward basic residues. The span at Ser849–Thr858 shows a compositional bias: low complexity. A compositionally biased stretch (basic and acidic residues) spans Gln864 to His877. The span at His879–Pro916 shows a compositional bias: low complexity. Residues Ser904–Asn1297 form a transactivation activation domain (TAD) region. Residues Arg921–Thr932 are compositionally biased toward polar residues. The segment covering Thr933 to Met944 has biased composition (pro residues). The segment covering Gln1019–Gln1036 has biased composition (basic and acidic residues). Composition is skewed to low complexity over residues Leu1037–Ser1062 and Gln1252–Gln1275. Composition is skewed to polar residues over residues Ile1276–Gln1286 and Ser1309–Pro1322. A C2H2-type 2 zinc finger spans residues Ile1326–His1349. The C2H2-type 3; degenerate zinc-finger motif lies at Phe1355–Arg1378. 2 consecutive C2H2-type zinc fingers follow at residues His1384–His1407 and His1413–His1435.

Zygotically expressed in the developing embryonic germ layers, nervous system, imaginal disk primordia and in larval wing and eye disks. As to expression, detected in the germline cells of the ovary, in unfertilized eggs and throughout early development. Later, it becomes mostly restricted to the nervous system and specific head regions. Also expressed in imaginal wing disks in third instar larvae.

The protein resides in the nucleus. It is found in the chromosome. In terms of biological role, transcription factor required for zygotic genome activation (ZGA), a critical event in early embryonic development during which the developmental control passes from maternally provided mRNAs to the expression of the zygotic genome after fertilization. Binds to regulatory DNA sequences containing a 5'-CAGGTAG-3' sequence motif, which are highly enriched among developmental enhancers. Within 1 hour into development, or by the embryo's 8th nuclear cycle, binds the majority of its motifs genome-wide. Zelda-binding promotes nucleosome depletion and chromatin accessibility, thereby facilitating the binding of patterning transcription factors, including the binding of the dorsoventral patterning transcription factors dorsal (dl) and twist (twi), and the anteroposterior patterning transcription factors bicoid (bcd) and caudal (cad). Promotes the activity of patterning transcription factors, such as bcd and dl, by lowering the concentration threshold required for transcriptional activation. Required both for the earliest (minor) and major waves of transcription during ZGA. Also involved in maternal mRNA clearance during the maternal-to-zygote transition by promoting expression of microRNAs (miRNAs), such as miR-1, miR-9a and miR-309, which mediate degradation of maternally-loaded RNAs. Also involved in post-blastoderm development: nvolved in nervous system development by maintaining neuroblasts in an undifferentiated state and equired for wing disk development. Its function is as follows. Constitutes the main isoform expressed throughout development. Transcription factor required for zygotic genome activation (ZGA). Acts as a dominant negative inhibitor of transcription factor activity of isoform A. The sequence is that of Transcription factor Zelda from Drosophila melanogaster (Fruit fly).